The primary structure comprises 1147 residues: Myosin light chain kinase, smooth muscle (1147 aa).

Positions 1–41 are actin-binding; it reads MDFRANLQRQVKPKTVSEEERKVHSPQQVDFRSVLAKKGTP. Residues 1 to 330 are disordered; the sequence is MDFRANLQRQ…PPASPGTAPT (330 aa). Residues 26 to 41 are calmodulin-binding; sequence PQQVDFRSVLAKKGTP. Residues 43–55 are compositionally biased toward pro residues; the sequence is TPVPEKAPPPKPA. Repeat copies occupy residues 100–111 and 112–123. A 16 X 12 AA tandem repeats region spans residues 100 to 288; the sequence is SLKPVANAKP…KAVANAKPAE (189 aa). A 3; truncated repeat occupies 124–132; that stretch reads TLKPVANAE. 13 tandem repeats follow at residues 133–144, 145–156, 157–168, 169–180, 181–192, 193–204, 205–216, 217–228, 229–240, 241–252, 253–264, 265–276, and 277–288. The actin-binding (calcium/calmodulin-insensitive) stretch occupies residues 292-692; the sequence is PAGKEELKKE…TVTVNTEQKV (401 aa). The segment covering 293 to 320 has biased composition (basic and acidic residues); that stretch reads AGKEELKKEVQNDVNCKREKAGAADNEK. Ig-like C2-type domains lie at 329 to 417 and 469 to 557; these read PTFK…CHVT and PQIP…VNLT. C350 and C401 are joined by a disulfide. Disordered stretches follow at residues 424–476 and 644–678; these read SENA…QFPE and SEPSQESELTTVGEKPEEPKDEVEEVSDDDEKEPE. Residues 459-472 show a composition bias toward pro residues; that stretch reads PKTPPKAATPPQIP. In terms of domain architecture, Fibronectin type-III spans 565–657; that stretch reads PAGTPCASDI…QESELTTVGE (93 aa). A compositionally biased stretch (polar residues) spans 644–653; sequence SEPSQESELT. Residues 662–677 are compositionally biased toward acidic residues; it reads PKDEVEEVSDDDEKEP. At S670 the chain carries Phosphoserine. Y681 bears the Phosphotyrosine; by ABL1 mark. A Protein kinase domain is found at 696–951; it reads YDIEERLGSG…CTQCLQHPWL (256 aa). ATP-binding positions include 702-710 and K725; that span reads LGSGKFGQV. Residue Y807 is modified to Phosphotyrosine; by ABL1. Catalysis depends on D817, which acts as the Proton acceptor. Position 867 is a phosphotyrosine; by ABL1 (Y867). The calmodulin-binding stretch occupies residues 943 to 1006; it reads TQCLQHPWLM…SGLSGRKSST (64 aa). Phosphoserine is present on residues S991, S992, S1004, S1005, and S1008. Positions 999–1019 are disordered; that stretch reads LSGRKSSTGSPTSPLTAERLE. The segment covering 1002–1013 has biased composition (polar residues); that stretch reads RKSSTGSPTSPL. T1010 carries the phosphothreonine modification. S1011 is subject to Phosphoserine. The Ig-like C2-type 3 domain maps to 1041–1130; sequence PYFSKTIRDL…GEATCTAELI (90 aa). A disulfide bridge connects residues C1062 and C1114.

Belongs to the protein kinase superfamily. CAMK Ser/Thr protein kinase family. As to quaternary structure, all isoforms including Telokin bind calmodulin. Interacts with SVIL. Interacts with CTTN; this interaction is reduced during thrombin-induced endothelial cell (EC) contraction but is promoted by the barrier-protective agonist sphingosine 1-phosphate (S1P) within lamellipodia. A complex made of ABL1, CTTN and MYLK regulates cortical actin-based cytoskeletal rearrangement critical to sphingosine 1-phosphate (S1P)-mediated endothelial cell (EC) barrier enhancement. Binds to NAA10/ARD1 and PTK2B/PYK2. Mg(2+) is required as a cofactor. The cofactor is Ca(2+). In terms of processing, the C-terminus is deglutamylated by AGTPBP1/CCP1, AGBL1/CCP4 and AGBL4/CCP6, leading to the formation of Myosin light chain kinase, smooth muscle, deglutamylated form. The consequences of C-terminal deglutamylation are unknown. Post-translationally, can probably be down-regulated by phosphorylation. Tyrosine phosphorylation by ABL1 increases kinase activity, reverses MLCK-mediated inhibition of Arp2/3-mediated actin polymerization, and enhances CTTN-binding. Phosphorylation by SRC promotes CTTN binding. In terms of tissue distribution, isoform Telokin is found in all smooth muscle tested except the aorta. It is not present in non-muscle tissue.

The protein localises to the cytoplasm. Its subcellular location is the cell projection. It localises to the lamellipodium. It is found in the cleavage furrow. The protein resides in the cytoskeleton. The protein localises to the stress fiber. It catalyses the reaction L-seryl-[myosin light chain] + ATP = O-phospho-L-seryl-[myosin light chain] + ADP + H(+). It carries out the reaction L-threonyl-[myosin light chain] + ATP = O-phospho-L-threonyl-[myosin light chain] + ADP + H(+). Its activity is regulated as follows. All catalytically active isoforms require binding to calcium and calmodulin for activation. Functionally, calcium/calmodulin-dependent myosin light chain kinase implicated in smooth muscle contraction via phosphorylation of myosin light chains (MLC). Also regulates actin-myosin interaction through a non-kinase activity. Phosphorylates PTK2B/PYK2 and myosin light-chains. Involved in the inflammatory response (e.g. apoptosis, vascular permeability, leukocyte diapedesis), cell motility and morphology, airway hyperreactivity and other activities relevant to asthma. Required for tonic airway smooth muscle contraction that is necessary for physiological and asthmatic airway resistance. Necessary for gastrointestinal motility. Implicated in the regulation of endothelial as well as vascular permeability, probably via the regulation of cytoskeletal rearrangements. In the nervous system it has been shown to control the growth initiation of astrocytic processes in culture and to participate in transmitter release at synapses formed between cultured sympathetic ganglion cells. Critical participant in signaling sequences that result in fibroblast apoptosis. Plays a role in the regulation of epithelial cell survival. Required for epithelial wound healing, especially during actomyosin ring contraction during purse-string wound closure. Mediates RhoA-dependent membrane blebbing. Triggers TRPC5 channel activity in a calcium-dependent signaling, by inducing its subcellular localization at the plasma membrane. Promotes cell migration (including tumor cells) and tumor metastasis. PTK2B/PYK2 activation by phosphorylation mediates ITGB2 activation and is thus essential to trigger neutrophil transmigration during acute lung injury (ALI). May regulate optic nerve head astrocyte migration. Probably involved in mitotic cytoskeletal regulation. Regulates tight junction probably by modulating ZO-1 exchange in the perijunctional actomyosin ring. Mediates burn-induced microvascular barrier injury; triggers endothelial contraction in the development of microvascular hyperpermeability by phosphorylating MLC. Essential for intestinal barrier dysfunction. Mediates Giardia spp.-mediated reduced epithelial barrier function during giardiasis intestinal infection via reorganization of cytoskeletal F-actin and tight junctional ZO-1. Necessary for hypotonicity-induced Ca(2+) entry and subsequent activation of volume-sensitive organic osmolyte/anion channels (VSOAC) in cervical cancer cells. This Oryctolagus cuniculus (Rabbit) protein is Myosin light chain kinase, smooth muscle (MYLK).